We begin with the raw amino-acid sequence, 194 residues long: Methylthioribulose-1-phosphate dehydratase (194 aa).

Zn(2+) contacts are provided by H84 and H86.

The protein belongs to the aldolase class II family. MtnB subfamily. Requires Zn(2+) as cofactor.

The catalysed reaction is 5-(methylsulfanyl)-D-ribulose 1-phosphate = 5-methylsulfanyl-2,3-dioxopentyl phosphate + H2O. It participates in amino-acid biosynthesis; L-methionine biosynthesis via salvage pathway; L-methionine from S-methyl-5-thio-alpha-D-ribose 1-phosphate: step 2/6. In terms of biological role, catalyzes the dehydration of methylthioribulose-1-phosphate (MTRu-1-P) into 2,3-diketo-5-methylthiopentyl-1-phosphate (DK-MTP-1-P). The protein is Methylthioribulose-1-phosphate dehydratase of Cronobacter sakazakii (Enterobacter sakazakii).